We begin with the raw amino-acid sequence, 607 residues long: Acyl-coenzyme A thioesterase 11 (607 aa).

A mitochondrion-targeting transit peptide spans 1-13 (MIQNVGNHLRRGL). Phosphoserine is present on residues serine 15 and serine 25. Positions 43 to 155 (NPTEVQMSQL…LATFVARREI (113 aa)) constitute a HotDog ACOT-type 1 domain. CoA contacts are provided by residues 91–93 (TAS), 120–122 (NSS), arginine 181, and 271–273 (HFR). Residues 216–329 (EKTRVESVEL…FMTFVVLDAD (114 aa)) enclose the HotDog ACOT-type 2 domain. Residues 375 to 585 (LSVPWDPSNQ…GWNGKLAGGH (211 aa)) enclose the START domain.

In terms of tissue distribution, isoform 1 is predominantly expressed in skeletal muscle, liver, testis, stomach, spleen, lung and brain. Isoform 2 is predominantly expressed in kidney, uterus, hibernoma and white adipose tissue.

The protein resides in the mitochondrion matrix. It is found in the cytoplasm. It catalyses the reaction hexadecanoyl-CoA + H2O = hexadecanoate + CoA + H(+). The enzyme catalyses tetradecanoyl-CoA + H2O = tetradecanoate + CoA + H(+). It carries out the reaction dodecanoyl-CoA + H2O = dodecanoate + CoA + H(+). The catalysed reaction is butanoyl-CoA + H2O = butanoate + CoA + H(+). The protein operates within lipid metabolism; fatty acid metabolism. Functionally, has an acyl-CoA thioesterase activity with a preference for the long chain fatty acyl-CoA thioesters hexadecanoyl-CoA/palmitoyl-CoA and tetradecanoyl-CoA/myristoyl-CoA which are the main substrates in the mitochondrial beta-oxidation pathway. The chain is Acyl-coenzyme A thioesterase 11 (ACOT11) from Homo sapiens (Human).